The primary structure comprises 214 residues: 3,4-dihydroxy-2-butanone 4-phosphate synthase (214 aa).

D-ribulose 5-phosphate is bound by residues 37–38, D42, 150–154, and E174; these read RE and RRGHT. Residue E38 coordinates Mg(2+). Residue H153 coordinates Mg(2+).

This sequence belongs to the DHBP synthase family. Homodimer. The cofactor is Mg(2+). Requires Mn(2+) as cofactor.

It carries out the reaction D-ribulose 5-phosphate = (2S)-2-hydroxy-3-oxobutyl phosphate + formate + H(+). It participates in cofactor biosynthesis; riboflavin biosynthesis; 2-hydroxy-3-oxobutyl phosphate from D-ribulose 5-phosphate: step 1/1. Catalyzes the conversion of D-ribulose 5-phosphate to formate and 3,4-dihydroxy-2-butanone 4-phosphate. In Desulfotalea psychrophila (strain LSv54 / DSM 12343), this protein is 3,4-dihydroxy-2-butanone 4-phosphate synthase.